A 354-amino-acid polypeptide reads, in one-letter code: Histidinol-phosphate aminotransferase (354 aa).

A compositionally biased stretch (basic and acidic residues) spans 1–11 (MKSFLSDKAKS). The segment at 1–33 (MKSFLSDKAKSIEPYTPGEQPKDKNYIKLNTNE) is disordered. At Lys-211 the chain carries N6-(pyridoxal phosphate)lysine.

This sequence belongs to the class-II pyridoxal-phosphate-dependent aminotransferase family. Histidinol-phosphate aminotransferase subfamily. As to quaternary structure, homodimer. Requires pyridoxal 5'-phosphate as cofactor.

It carries out the reaction L-histidinol phosphate + 2-oxoglutarate = 3-(imidazol-4-yl)-2-oxopropyl phosphate + L-glutamate. Its pathway is amino-acid biosynthesis; L-histidine biosynthesis; L-histidine from 5-phospho-alpha-D-ribose 1-diphosphate: step 7/9. This is Histidinol-phosphate aminotransferase from Brachyspira hyodysenteriae (strain ATCC 49526 / WA1).